A 125-amino-acid chain; its full sequence is Plastocyanin (125 aa).

A signal peptide spans 1–34 (MKVLASFARRLSLFAVAAVLCVGSFFLSAAPASA). Residues 35-125 (QTVAIKMGAD…AGMVGKIVVQ (91 aa)) enclose the Plastocyanin-like domain. His-73, Cys-110, His-113, and Met-118 together coordinate Cu cation.

Belongs to the plastocyanin family. Requires Cu(2+) as cofactor.

The protein localises to the cellular thylakoid membrane. Participates in electron transfer between P700 and the cytochrome b6-f complex in photosystem I. The protein is Plastocyanin (petE) of Synechococcus elongatus (strain ATCC 33912 / PCC 7942 / FACHB-805) (Anacystis nidulans R2).